The following is a 123-amino-acid chain: WAP four-disulfide core domain protein 5 (123 aa).

An N-terminal signal peptide occupies residues 1–24 (MRFGRLLLLAVLLAGVSQLPAVSG). WAP domains are found at residues 27–74 (KGEK…IPRV) and 75–121 (SVKL…RDPV). Intrachain disulfides connect C34–C62, C41–C66, C49–C61, C55–C70, C81–C109, C88–C113, C96–C108, and C102–C117.

The protein localises to the secreted. In terms of biological role, putative acid-stable proteinase inhibitor. This chain is WAP four-disulfide core domain protein 5 (WFDC5), found in Otolemur garnettii (Small-eared galago).